A 627-amino-acid chain; its full sequence is 2-oxoacid:ferredoxin oxidoreductase 1, subunit alpha (627 aa).

A YPITP motif motif is present at residues 253–257; the sequence is YPITP. Threonine 256 and arginine 344 together coordinate substrate.

As to quaternary structure, heterodimer composed of an alpha and a beta subunit.

The enzyme catalyses a 2-oxocarboxylate + 2 oxidized [2Fe-2S]-[ferredoxin] + CoA = an acyl-CoA + 2 reduced [2Fe-2S]-[ferredoxin] + CO2 + H(+). Its activity is regulated as follows. Inhibited by low concentration of 4-fluoro-7-nitrobenzofurazan (NBD-F). Functionally, catalyzes the coenzyme A-dependent oxidative decarboxylation of different 2-oxoacids such as 2-oxoglutarate, pyruvate and 2-oxobutyrate to form their CoA derivatives. This chain is 2-oxoacid:ferredoxin oxidoreductase 1, subunit alpha, found in Sulfurisphaera tokodaii (strain DSM 16993 / JCM 10545 / NBRC 100140 / 7) (Sulfolobus tokodaii).